Here is a 518-residue protein sequence, read N- to C-terminus: Putative succinate-semialdehyde dehydrogenase [NADP(+)] 2 (518 aa).

NADP(+)-binding positions include tryptophan 157 to asparagine 158, lysine 181 to serine 184, and glycine 232 to serine 233. Glutamate 254 serves as the catalytic Proton acceptor. NADP(+) is bound at residue leucine 255. Cysteine 288 serves as the catalytic Nucleophile. Glutamate 386 lines the NADP(+) pocket.

It belongs to the aldehyde dehydrogenase family.

The catalysed reaction is succinate semialdehyde + NADP(+) + H2O = succinate + NADPH + 2 H(+). Its function is as follows. Catalyzes the NADP(+)-dependent oxidation of succinate semialdehyde to succinate. Although it has succinate semialdehyde dehydrogenase activity, is likely to act physiologically on a different aldehyde(s). The sequence is that of Putative succinate-semialdehyde dehydrogenase [NADP(+)] 2 (gabD2) from Mycobacterium bovis (strain ATCC BAA-935 / AF2122/97).